A 187-amino-acid polypeptide reads, in one-letter code: Ribonuclease HII (187 aa).

The 187-residue stretch at 1–187 (MIILGIDEAG…YKPVQVLLNE (187 aa)) folds into the RNase H type-2 domain. 3 residues coordinate a divalent metal cation: Asp7, Glu8, and Asp99.

Belongs to the RNase HII family. Requires Mn(2+) as cofactor. The cofactor is Mg(2+).

The protein localises to the cytoplasm. The enzyme catalyses Endonucleolytic cleavage to 5'-phosphomonoester.. Its function is as follows. Endonuclease that specifically degrades the RNA of RNA-DNA hybrids. The protein is Ribonuclease HII of Francisella tularensis subsp. tularensis (strain FSC 198).